A 574-amino-acid polypeptide reads, in one-letter code: Septation ring formation regulator EzrA (574 aa).

Over 1–7 (MSSGIVL) the chain is Extracellular. Residues 8–26 (LIVAIVLVVIIAYLIAIII) form a helical membrane-spanning segment. At 27–574 (RKRNDSLITK…YEKTRETIRF (548 aa)) the chain is on the cytoplasmic side. Coiled coils occupy residues 102–141 (NFIR…EEKN), 255–368 (KNIE…KDVL), and 409–495 (LKNI…EETA).

This sequence belongs to the EzrA family.

It is found in the cell membrane. In terms of biological role, negative regulator of FtsZ ring formation; modulates the frequency and position of FtsZ ring formation. Inhibits FtsZ ring formation at polar sites. Interacts either with FtsZ or with one of its binding partners to promote depolymerization. The protein is Septation ring formation regulator EzrA of Streptococcus mutans serotype c (strain ATCC 700610 / UA159).